A 779-amino-acid chain; its full sequence is Transcriptional regulator QRICH1 (779 aa).

Methionine 1 is subject to N-acetylmethionine. One can recognise a CARD domain in the interval glutamate 6–threonine 48. 2 disordered regions span residues glutamine 141–serine 163 and alanine 219–valine 242. Serine 346 carries the post-translational modification Phosphoserine. Residues lysine 354 and lysine 359 each participate in a glycyl lysine isopeptide (Lys-Gly) (interchain with G-Cter in SUMO2) cross-link. A compositionally biased stretch (low complexity) spans glutamine 420–glutamate 430. Residues glutamine 420–glutamine 443 form a disordered region. At serine 467 the chain carries Phosphoserine.

The protein resides in the nucleus. It is found in the cytoplasm. The protein localises to the cell membrane. In terms of biological role, transcriptional regulator that acts as a mediator of the integrated stress response (ISR) through transcriptional control of protein homeostasis under conditions of ER stress. Controls the outcome of the unfolded protein response (UPR), an ER-stress response pathway that either promotes recovery of ER homeostasis and cell survival, or triggers the terminal UPR which elicits programmed cell death when ER stress is prolonged and unresolved. ER stress induces QRICH1 translation by a ribosome translation re-initiation mechanism in response to EIF2S1/eIF-2-alpha phosphorylation, and stress-induced QRICH1 regulates a transcriptional program associated with protein translation, protein secretion-mediated proteotoxicity and cell death during the terminal UPR. May cooperate with ATF4 transcription factor signaling to regulate ER homeostasis which is critical for cell viability. Up-regulates CASP3/caspase-3 activity in epithelial cells under ER stress. Central regulator of proteotoxicity associated with ER stress-mediated inflammatory diseases in the intestines and liver. Involved in chondrocyte hypertrophy, a process required for normal longitudinal bone growth. In Bos taurus (Bovine), this protein is Transcriptional regulator QRICH1 (QRICH1).